We begin with the raw amino-acid sequence, 242 residues long: Phosphoribosylaminoimidazole-succinocarboxamide synthase (242 aa).

It belongs to the SAICAR synthetase family.

It catalyses the reaction 5-amino-1-(5-phospho-D-ribosyl)imidazole-4-carboxylate + L-aspartate + ATP = (2S)-2-[5-amino-1-(5-phospho-beta-D-ribosyl)imidazole-4-carboxamido]succinate + ADP + phosphate + 2 H(+). It functions in the pathway purine metabolism; IMP biosynthesis via de novo pathway; 5-amino-1-(5-phospho-D-ribosyl)imidazole-4-carboxamide from 5-amino-1-(5-phospho-D-ribosyl)imidazole-4-carboxylate: step 1/2. This Pediococcus pentosaceus (strain ATCC 25745 / CCUG 21536 / LMG 10740 / 183-1w) protein is Phosphoribosylaminoimidazole-succinocarboxamide synthase.